The following is a 335-amino-acid chain: ATP-dependent 6-phosphofructokinase (335 aa).

Gly-11 serves as a coordination point for ATP. ADP is bound at residue 21–25; it reads RAVVR. Residues 72–73 and 102–105 contribute to the ATP site; these read RY and GDGS. Asp-103 serves as a coordination point for Mg(2+). 125–127 lines the substrate pocket; the sequence is TID. Asp-127 functions as the Proton acceptor in the catalytic mechanism. Residue Arg-154 participates in ADP binding. Substrate-binding positions include Arg-162 and 169-171; that span reads MGR. ADP contacts are provided by residues 185-187 and 213-215; these read GAD and KKH. Substrate-binding positions include Glu-222, Arg-244, and 250–253; that span reads HIQR.

It belongs to the phosphofructokinase type A (PFKA) family. ATP-dependent PFK group I subfamily. Prokaryotic clade 'B1' sub-subfamily. As to quaternary structure, homotetramer. Mg(2+) serves as cofactor.

The protein resides in the cytoplasm. The catalysed reaction is beta-D-fructose 6-phosphate + ATP = beta-D-fructose 1,6-bisphosphate + ADP + H(+). It participates in carbohydrate degradation; glycolysis; D-glyceraldehyde 3-phosphate and glycerone phosphate from D-glucose: step 3/4. With respect to regulation, allosterically activated by ADP and other diphosphonucleosides, and allosterically inhibited by phosphoenolpyruvate. Functionally, catalyzes the phosphorylation of D-fructose 6-phosphate to fructose 1,6-bisphosphate by ATP, the first committing step of glycolysis. The polypeptide is ATP-dependent 6-phosphofructokinase (Streptococcus pneumoniae serotype 4 (strain ATCC BAA-334 / TIGR4)).